The following is a 187-amino-acid chain: Pseudo histidine-containing phosphotransfer protein 1 (187 aa).

One can recognise an HPt domain in the interval 74–169 (SPNFVEEVVT…AVLRQKLESY (96 aa)).

Functionally, functions as a two-component phosphorelay mediator between cytokinin sensor histidine kinases and response regulators (B-type ARRs). Plays an important role in propagating cytokinin signal transduction. The polypeptide is Pseudo histidine-containing phosphotransfer protein 1 (Oryza sativa subsp. japonica (Rice)).